The sequence spans 137 residues: Probable S-adenosyl-L-methionine-binding protein MTH_1797 (137 aa).

Positions 8–137 constitute a TsaA-like domain; that stretch reads IRPVGVVRSP…YYEDIDSLGF (130 aa). S-adenosyl-L-methionine contacts are provided by residues 25-27, 63-64, Arg87, Leu97, and 117-120; these read PAQ, HL, and LDGS.

It belongs to the tRNA methyltransferase O family.

The chain is Probable S-adenosyl-L-methionine-binding protein MTH_1797 from Methanothermobacter thermautotrophicus (strain ATCC 29096 / DSM 1053 / JCM 10044 / NBRC 100330 / Delta H) (Methanobacterium thermoautotrophicum).